We begin with the raw amino-acid sequence, 214 residues long: Ribosomal RNA large subunit methyltransferase E (214 aa).

Residues glycine 68, tryptophan 70, aspartate 88, aspartate 104, and aspartate 129 each contribute to the S-adenosyl-L-methionine site. Residue lysine 169 is the Proton acceptor of the active site.

Belongs to the class I-like SAM-binding methyltransferase superfamily. RNA methyltransferase RlmE family.

The protein resides in the cytoplasm. It catalyses the reaction uridine(2552) in 23S rRNA + S-adenosyl-L-methionine = 2'-O-methyluridine(2552) in 23S rRNA + S-adenosyl-L-homocysteine + H(+). Specifically methylates the uridine in position 2552 of 23S rRNA at the 2'-O position of the ribose in the fully assembled 50S ribosomal subunit. The sequence is that of Ribosomal RNA large subunit methyltransferase E from Magnetococcus marinus (strain ATCC BAA-1437 / JCM 17883 / MC-1).